The following is a 100-amino-acid chain: MELTPREKDKLLLFTAALVAERRLARGVTLNYPESVALISAFIMEGARDGQTVAELMEAGRHVLTRAQVMEGVPEMIPDIQVEATFPDGSKLVTVHNPIV.

The protein belongs to the urease gamma subunit family. In terms of assembly, heterotrimer of UreA (gamma), UreB (beta) and UreC (alpha) subunits. Three heterotrimers associate to form the active enzyme.

Its subcellular location is the cytoplasm. The enzyme catalyses urea + 2 H2O + H(+) = hydrogencarbonate + 2 NH4(+). It functions in the pathway nitrogen metabolism; urea degradation; CO(2) and NH(3) from urea (urease route): step 1/1. The chain is Urease subunit gamma from Enterobacter sp. (strain 638).